The sequence spans 257 residues: Aspartate/glutamate leucyltransferase (257 aa).

Belongs to the R-transferase family. Bpt subfamily.

Its subcellular location is the cytoplasm. It carries out the reaction N-terminal L-glutamyl-[protein] + L-leucyl-tRNA(Leu) = N-terminal L-leucyl-L-glutamyl-[protein] + tRNA(Leu) + H(+). The catalysed reaction is N-terminal L-aspartyl-[protein] + L-leucyl-tRNA(Leu) = N-terminal L-leucyl-L-aspartyl-[protein] + tRNA(Leu) + H(+). Functionally, functions in the N-end rule pathway of protein degradation where it conjugates Leu from its aminoacyl-tRNA to the N-termini of proteins containing an N-terminal aspartate or glutamate. The sequence is that of Aspartate/glutamate leucyltransferase from Rhodopseudomonas palustris (strain BisB5).